A 194-amino-acid polypeptide reads, in one-letter code: FMN-dependent NADH:quinone oxidoreductase (194 aa).

FMN-binding positions include serine 9, 15-17, and 85-88; these read SIS and MYNF.

It belongs to the azoreductase type 1 family. As to quaternary structure, homodimer. FMN is required as a cofactor.

It catalyses the reaction 2 a quinone + NADH + H(+) = 2 a 1,4-benzosemiquinone + NAD(+). The enzyme catalyses N,N-dimethyl-1,4-phenylenediamine + anthranilate + 2 NAD(+) = 2-(4-dimethylaminophenyl)diazenylbenzoate + 2 NADH + 2 H(+). Functionally, quinone reductase that provides resistance to thiol-specific stress caused by electrophilic quinones. Also exhibits azoreductase activity. Catalyzes the reductive cleavage of the azo bond in aromatic azo compounds to the corresponding amines. This is FMN-dependent NADH:quinone oxidoreductase from Xanthomonas oryzae pv. oryzae (strain MAFF 311018).